Reading from the N-terminus, the 462-residue chain is Chromosomal replication initiator protein DnaA (462 aa).

The segment at 1–84 (MAVSLWQQCI…RFDIGSRPSA (84 aa)) is domain I, interacts with DnaA modulators. The interval 84–125 (ARTVQPAPAAPRPTTGHTQTKARVGTAFNIQAEPMANANHRS) is domain II. Residues 126 to 342 (NINPTYQFDN…GALNRVIANA (217 aa)) form a domain III, AAA+ region region. ATP-binding residues include glycine 170, glycine 172, lysine 173, and threonine 174. The segment at 343–462 (NFTGRPITID…YANLIRTLSS (120 aa)) is domain IV, binds dsDNA.

This sequence belongs to the DnaA family. As to quaternary structure, oligomerizes as a right-handed, spiral filament on DNA at oriC.

It localises to the cytoplasm. In terms of biological role, plays an essential role in the initiation and regulation of chromosomal replication. ATP-DnaA binds to the origin of replication (oriC) to initiate formation of the DNA replication initiation complex once per cell cycle. Binds the DnaA box (a 9 base pair repeat at the origin) and separates the double-stranded (ds)DNA. Forms a right-handed helical filament on oriC DNA; dsDNA binds to the exterior of the filament while single-stranded (ss)DNA is stabiized in the filament's interior. The ATP-DnaA-oriC complex binds and stabilizes one strand of the AT-rich DNA unwinding element (DUE), permitting loading of DNA polymerase. After initiation quickly degrades to an ADP-DnaA complex that is not apt for DNA replication. Binds acidic phospholipids. In Shewanella denitrificans (strain OS217 / ATCC BAA-1090 / DSM 15013), this protein is Chromosomal replication initiator protein DnaA.